The following is a 235-amino-acid chain: MSVISMKQLLEAGVHFGHQTRRWNPKMAPYIFTERNGIYIIDLQQTVEKLEQAYEFVKKLAMEGGTILFVGTKKQAQDSIKEEAERCGMFYVNQRWLGGTLTNFKTIRGRIQRLKELKKMEEDGTFDVLPKKEVIKLRKEKERLQKFLGGIENMQSLPSALFIVDPKKEAIAVAEARSLEIPIVAIVDTNCDPELIDYPIPGNDDAIRAVKLITSKIADAVIEGNQGEQFAASEE.

This sequence belongs to the universal ribosomal protein uS2 family.

The chain is Small ribosomal subunit protein uS2 from Thermoanaerobacter sp. (strain X514).